Reading from the N-terminus, the 215-residue chain is MKYQLTALEARVIGCLLEKQVTTPEQYPLSVNGVVTACNQKTNREPVMNLSESEVQEQLDNLVKRHYLRTVSGFGNRVTKYEQRFCNSEFGDLKLSAAEVALITTLLLRGAQTPGELRSRAARMYEFSDMAEVESTLEQLANREDGPFVVRLAREPGKRENRYMHLFSGEVEDQPAVTDMSNAVDGDLQARVEALEIEVAELKQRLDSLLAHLGD.

At Lys80 the chain carries N6-acetyllysine.

Belongs to the UPF0502 family.

In Escherichia coli (strain K12 / MC4100 / BW2952), this protein is UPF0502 protein YceH.